An 890-amino-acid polypeptide reads, in one-letter code: Pentatricopeptide repeat-containing protein At3g57430, chloroplastic (890 aa).

A chloroplast-targeting transit peptide spans 1-44; that stretch reads MSCPLAFTFSLPSIFPFPSQLLPFSRHKHPYLLRATPTSATEDV. 18 PPR repeats span residues 61 to 95, 96 to 130, 132 to 162, 163 to 197, 198 to 231, 235 to 265, 266 to 300, 301 to 335, 337 to 371, 372 to 398, 404 to 438, 439 to 473, 474 to 504, 516 to 550, 551 to 581, 582 to 616, 617 to 652, and 653 to 683; these read SPEW…GIKP, DNYA…GYGV, SVTV…ISER, NQVS…NVEP, SSFT…GLRK, NSFI…FGGR, DLVT…GVEP, DEFT…GSLD, NSFV…KIGL, WNAM…MEES, NSTT…GLDR, DRFV…DLVT, WNTM…ERKV, NSIT…NLAT, DVAV…IPQK, NVIT…GVKP, NEVT…GVEP, and SSDH…MPRD. A type E motif region spans residues 689–764; the sequence is AWSSLLGASR…EPGCSWIEHG (76 aa). A type E(+) motif region spans residues 765–795; it reads DEVHKFVAGDSSHPQSEKLSGYLETLWERMR. Residues 796–890 are type DYW motif; it reads KEGYVPDTSC…NGTCSCGDYW (95 aa).

The protein belongs to the PPR family. PCMP-H subfamily.

The protein localises to the plastid. It localises to the chloroplast. Involved in RNA editing events in chloroplasts. Required for the editing of a single site in ndhB and ndhF transcripts, which are two plastid-encoded subunits of the chloroplast NAD(P)H dehydrogenase (NDH) complex. Required for the editing of a single site in psbZ. Required for optimal activity of the NDH complex of the photosynthetic electron transport chain. This chain is Pentatricopeptide repeat-containing protein At3g57430, chloroplastic (PCMP-H81), found in Arabidopsis thaliana (Mouse-ear cress).